The following is an 842-amino-acid chain: Probable cleavage and polyadenylation specificity factor subunit 2 (842 aa).

The segment covering alanine 414–arginine 425 has biased composition (basic and acidic residues). 2 disordered regions span residues alanine 414–alanine 442 and methionine 708–isoleucine 747. Residues glutamate 432–isoleucine 441 show a composition bias toward acidic residues. Residues serine 731–isoleucine 747 show a composition bias toward polar residues.

It belongs to the metallo-beta-lactamase superfamily. RNA-metabolizing metallo-beta-lactamase-like family. CPSF2/YSH1 subfamily. In terms of assembly, CPSF is a heterotetramer composed of four distinct subunits 160, 100, 70 and 30 kDa.

Its subcellular location is the nucleus. CPSF plays a key role in pre-mRNA 3'-end formation, recognizing the AAUAAA signal sequence and interacting with poly(A)polymerase and other factors to bring about cleavage and poly(A) addition. The protein is Probable cleavage and polyadenylation specificity factor subunit 2 of Caenorhabditis briggsae.